Consider the following 302-residue polypeptide: Vacuolar protein sorting-associated protein 26A (302 aa).

Belongs to the VPS26 family. As to quaternary structure, component of the retromer complex which consists of VPS29 (MAG1), VPS26 (VPS26A or VPS26B), VPS35 (VPS35A or VPS35B or VPS35C), VPS5/17 (SNX1 or SNX2A or SNX2B). Component of a retromer subcomplex consisting of VPS29 (MAG1), VPS26 (VPS26A or VPS26B), VPS35 (VPS35A or VPS35B or VPS35C).

The protein localises to the cytoplasm. Its subcellular location is the endosome membrane. It localises to the prevacuolar compartment membrane. The protein resides in the golgi apparatus. It is found in the trans-Golgi network membrane. Plays a role in vesicular protein sorting. Component of the membrane-associated retromer complex which is essential in endosome-to-Golgi retrograde transport. The VPS29-VPS26-VPS35 subcomplex may be involved in recycling of specific cargos from endosome to the plasma membrane. In Arabidopsis thaliana (Mouse-ear cress), this protein is Vacuolar protein sorting-associated protein 26A (VPS26A).